We begin with the raw amino-acid sequence, 513 residues long: Serine/threonine-protein kinase pakH (513 aa).

The Protein kinase domain maps to 42 to 294 (FEIQEKLGEG…PSQLLDHPFI (253 aa)). ATP contacts are provided by residues 48–56 (LGEGSFGSV) and K71. Residue D163 is the Proton acceptor of the active site. Residues 313–358 (KSKKRKSIGPSVSPKQQPNDNNNNNNNNKPQFLSKLLNNNSNSSND) form a disordered region. A compositionally biased stretch (low complexity) spans 331-357 (NDNNNNNNNNKPQFLSKLLNNNSNSSN). A helical transmembrane segment spans residues 493–512 (IVLYSTLGLILVLSVFFKFF).

It belongs to the protein kinase superfamily. STE Ser/Thr protein kinase family. STE20 subfamily. The cofactor is Mg(2+).

Its subcellular location is the membrane. The catalysed reaction is L-seryl-[protein] + ATP = O-phospho-L-seryl-[protein] + ADP + H(+). It catalyses the reaction L-threonyl-[protein] + ATP = O-phospho-L-threonyl-[protein] + ADP + H(+). The sequence is that of Serine/threonine-protein kinase pakH (pakH-1) from Dictyostelium discoideum (Social amoeba).